A 63-amino-acid polypeptide reads, in one-letter code: Large ribosomal subunit protein bL32 (63 aa).

The protein belongs to the bacterial ribosomal protein bL32 family.

The polypeptide is Large ribosomal subunit protein bL32 (rpmF) (Aquifex aeolicus (strain VF5)).